Consider the following 549-residue polypeptide: Glucose-6-phosphate isomerase (549 aa).

The Proton donor role is filled by glutamate 355. Catalysis depends on residues histidine 386 and lysine 514.

The protein belongs to the GPI family.

It is found in the cytoplasm. The enzyme catalyses alpha-D-glucose 6-phosphate = beta-D-fructose 6-phosphate. Its pathway is carbohydrate biosynthesis; gluconeogenesis. It participates in carbohydrate degradation; glycolysis; D-glyceraldehyde 3-phosphate and glycerone phosphate from D-glucose: step 2/4. Functionally, catalyzes the reversible isomerization of glucose-6-phosphate to fructose-6-phosphate. This Cronobacter sakazakii (strain ATCC BAA-894) (Enterobacter sakazakii) protein is Glucose-6-phosphate isomerase.